We begin with the raw amino-acid sequence, 292 residues long: Zinc finger protein SNAI3 (292 aa).

The tract at residues 1–20 (MPRSFLVKTHSSHRVPNYRR) is SNAG domain. 4 consecutive C2H2-type zinc fingers follow at residues 152-174 (FECFHCHKPYHTLAGLARHRQLH), 183-205 (FTCKYCDKEYTSLGALKMHIRTH), 209-231 (CTCKICGKAFSRPWLLQGHVRTH), and 237-259 (YACSHCSRAFADRSNLRAHLQTH). The segment at 265 to 287 (YRCRRCTKTFSRMSLLARHEESG) adopts a C2H2-type 5; degenerate zinc-finger fold.

It belongs to the snail C2H2-type zinc-finger protein family.

The protein localises to the nucleus. Functionally, seems to inhibit myoblast differentiation. Transcriptional repressor of E-box-dependent transactivation of downstream myogenic bHLHs genes. Binds preferentially to the canonical E-box sequences 5'-CAGGTG-3' and 5'-CACCTG-3'. In Homo sapiens (Human), this protein is Zinc finger protein SNAI3 (SNAI3).